A 156-amino-acid polypeptide reads, in one-letter code: Ribosomal RNA large subunit methyltransferase H (156 aa).

S-adenosyl-L-methionine-binding positions include leucine 74, glycine 105, and 124 to 129; that span reads LSKLTL.

Belongs to the RNA methyltransferase RlmH family. In terms of assembly, homodimer.

It is found in the cytoplasm. It carries out the reaction pseudouridine(1915) in 23S rRNA + S-adenosyl-L-methionine = N(3)-methylpseudouridine(1915) in 23S rRNA + S-adenosyl-L-homocysteine + H(+). Specifically methylates the pseudouridine at position 1915 (m3Psi1915) in 23S rRNA. The polypeptide is Ribosomal RNA large subunit methyltransferase H (Legionella pneumophila (strain Lens)).